The sequence spans 526 residues: Protein mono-ADP-ribosyltransferase PARP3 (526 aa).

A disordered region spans residues 1–55; that stretch reads MAPKRRAPPASQPADGGKKAKGGQEEEEDAWSSALNALKTAPREKPPATIDGQCP. The WGR domain maps to 61–151; the sequence is DAKVYEDYDC…DNFVAQPGKY (91 aa). The 119-residue stretch at 183–301 folds into the PARP alpha-helical domain; it reads PCALDETTQK…DIEVAQSLQA (119 aa). A PARP catalytic domain is found at 312-526; that stretch reads HPLDRDYALL…RIRYLVQLHF (215 aa).

This sequence belongs to the ARTD/PARP family.

The protein localises to the nucleus. The protein resides in the chromosome. It is found in the cytoplasm. Its subcellular location is the cytoskeleton. It localises to the microtubule organizing center. The protein localises to the centrosome. The protein resides in the centriole. It catalyses the reaction L-aspartyl-[protein] + NAD(+) = 4-O-(ADP-D-ribosyl)-L-aspartyl-[protein] + nicotinamide. It carries out the reaction L-glutamyl-[protein] + NAD(+) = 5-O-(ADP-D-ribosyl)-L-glutamyl-[protein] + nicotinamide. The catalysed reaction is L-lysyl-[protein] + NAD(+) = N(6)-(ADP-D-ribosyl)-L-lysyl-[protein] + nicotinamide + H(+). Mono-ADP-ribosyltransferase that mediates mono-ADP-ribosylation of target proteins and plays a key role in the response to DNA damage. Mediates mono-ADP-ribosylation of glutamate, aspartate or lysine residues on target proteins. In contrast to PARP1 and PARP2, it is not able to mediate poly-ADP-ribosylation. Involved in DNA repair by mediating mono-ADP-ribosylation of a limited number of acceptor proteins involved in chromatin architecture and in DNA metabolism, such as histone H2B, XRCC5 and XRCC6. ADP-ribosylation follows DNA damage and appears as an obligatory step in a detection/signaling pathway leading to the reparation of DNA strand breaks. Involved in single-strand break repair by catalyzing mono-ADP-ribosylation of histone H2B on 'Glu-2' (H2BE2ADPr) of nucleosomes containing nicked DNA. Cooperates with the XRCC5-XRCC6 (Ku80-Ku70) heterodimer to limit end-resection thereby promoting accurate NHEJ. Associates with a number of DNA repair factors and is involved in the response to exogenous and endogenous DNA strand breaks. Together with APLF, promotes the retention of the LIG4-XRCC4 complex on chromatin and accelerate DNA ligation during non-homologous end-joining (NHEJ). In addition to proteins, also able to ADP-ribosylate DNA: mediates DNA mono-ADP-ribosylation of DNA strand break termini via covalent addition of a single ADP-ribose moiety to a 5'- or 3'-terminal phosphate residues in DNA containing multiple strand breaks. The protein is Protein mono-ADP-ribosyltransferase PARP3 of Gallus gallus (Chicken).